The sequence spans 905 residues: Alanine--tRNA ligase (905 aa).

Residues histidine 569, histidine 573, cysteine 693, and histidine 697 each coordinate Zn(2+).

The protein belongs to the class-II aminoacyl-tRNA synthetase family. Zn(2+) is required as a cofactor.

The protein resides in the cytoplasm. The catalysed reaction is tRNA(Ala) + L-alanine + ATP = L-alanyl-tRNA(Ala) + AMP + diphosphate. Catalyzes the attachment of alanine to tRNA(Ala) in a two-step reaction: alanine is first activated by ATP to form Ala-AMP and then transferred to the acceptor end of tRNA(Ala). Also edits incorrectly charged Ser-tRNA(Ala) and Gly-tRNA(Ala) via its editing domain. The chain is Alanine--tRNA ligase from Roseiflexus sp. (strain RS-1).